A 331-amino-acid polypeptide reads, in one-letter code: Holliday junction branch migration complex subunit RuvB (331 aa).

A large ATPase domain (RuvB-L) region spans residues 1–182 (MDDRMVDQAL…FGVHLRLEYY (182 aa)). ATP is bound by residues leucine 21, arginine 22, glycine 63, lysine 66, threonine 67, threonine 68, 129-131 (EDF), arginine 172, tyrosine 182, and arginine 219. Residue threonine 67 participates in Mg(2+) binding. The interval 183-253 (NENDLKEIII…TTKQALQLLQ (71 aa)) is small ATPAse domain (RuvB-S). Positions 256–331 (AEGLDYIDHK…AYEHFKNFNK (76 aa)) are head domain (RuvB-H). Positions 292, 311, and 316 each coordinate DNA.

The protein belongs to the RuvB family. In terms of assembly, homohexamer. Forms an RuvA(8)-RuvB(12)-Holliday junction (HJ) complex. HJ DNA is sandwiched between 2 RuvA tetramers; dsDNA enters through RuvA and exits via RuvB. An RuvB hexamer assembles on each DNA strand where it exits the tetramer. Each RuvB hexamer is contacted by two RuvA subunits (via domain III) on 2 adjacent RuvB subunits; this complex drives branch migration. In the full resolvosome a probable DNA-RuvA(4)-RuvB(12)-RuvC(2) complex forms which resolves the HJ.

Its subcellular location is the cytoplasm. It catalyses the reaction ATP + H2O = ADP + phosphate + H(+). In terms of biological role, the RuvA-RuvB-RuvC complex processes Holliday junction (HJ) DNA during genetic recombination and DNA repair, while the RuvA-RuvB complex plays an important role in the rescue of blocked DNA replication forks via replication fork reversal (RFR). RuvA specifically binds to HJ cruciform DNA, conferring on it an open structure. The RuvB hexamer acts as an ATP-dependent pump, pulling dsDNA into and through the RuvAB complex. RuvB forms 2 homohexamers on either side of HJ DNA bound by 1 or 2 RuvA tetramers; 4 subunits per hexamer contact DNA at a time. Coordinated motions by a converter formed by DNA-disengaged RuvB subunits stimulates ATP hydrolysis and nucleotide exchange. Immobilization of the converter enables RuvB to convert the ATP-contained energy into a lever motion, pulling 2 nucleotides of DNA out of the RuvA tetramer per ATP hydrolyzed, thus driving DNA branch migration. The RuvB motors rotate together with the DNA substrate, which together with the progressing nucleotide cycle form the mechanistic basis for DNA recombination by continuous HJ branch migration. Branch migration allows RuvC to scan DNA until it finds its consensus sequence, where it cleaves and resolves cruciform DNA. In Staphylococcus haemolyticus (strain JCSC1435), this protein is Holliday junction branch migration complex subunit RuvB.